The sequence spans 198 residues: tRNA(Phe) 7-((3-amino-3-carboxypropyl)-4-demethylwyosine(37)-N(4))-methyltransferase 1 (198 aa).

This sequence belongs to the TYW3 family.

The catalysed reaction is 4-demethyl-7-[(3S)-3-amino-3-carboxypropyl]wyosine(37) in tRNA(Phe) + S-adenosyl-L-methionine = 7-[(3S)-3-amino-3-carboxypropyl]wyosine(37) in tRNA(Phe) + S-adenosyl-L-homocysteine + H(+). S-adenosyl-L-methionine-dependent methyltransferase that acts as a component of the wyosine derivatives biosynthesis pathway. Probably methylates N-4 position of wybutosine-86 to produce wybutosine-72. The chain is tRNA(Phe) 7-((3-amino-3-carboxypropyl)-4-demethylwyosine(37)-N(4))-methyltransferase 1 from Thermococcus kodakarensis (strain ATCC BAA-918 / JCM 12380 / KOD1) (Pyrococcus kodakaraensis (strain KOD1)).